Reading from the N-terminus, the 182-residue chain is Vacuolar protein sorting-associated protein 29 (182 aa).

An N6-acetyllysine modification is found at Lys50.

This sequence belongs to the VPS29 family. As to quaternary structure, component of the commander complex consisting of the CCC subcomplex and the retriever subcomplex. Component of the heterotrimeric retriever complex formed by VPS26C, VPS29 and VPS35L; within the complex interacts with VPS35L. Component of the heterotrimeric retromer cargo-selective complex (CSC), also described as vacuolar protein sorting subcomplex (VPS) formed by VPS26 (VPS26A or VPS26B), VPS29 and VPS35. The CSC has a highly elongated structure with VPS26 and VPS29 binding independently at opposite distal ends of VPS35 as central platform. The CSC is believed to associate with variable sorting nexins to form functionally distinct retromer complex variants. The originally described retromer complex (also called SNX-BAR retromer) is a pentamer containing the CSC and a heterodimeric membrane-deforming subcomplex formed between SNX1 or SNX2 and SNX5 or SNX6 (also called SNX-BAR subcomplex); the respective CSC and SNX-BAR subcomplexes associate with low affinity. The CSC associates with SNX3 to form a SNX3-retromer complex. The CSC associates with SNX27, the WASH complex and the SNX-BAR subcomplex to form the SNX27-retromer complex. Interacts with VPS26A, VPS35, SNX1, SNX2, SNX3, SNX27, WASHC5. Interacts with TBC1D5; this interaction is blocked by VPS35L in the retriever complex. Interacts with SNX17; the interaction is indirect; SNX17 (via its C-terminus) interacts with the retriever complex (via VPS26C and VPS35L). Interacts with VPS26B and ANKRD27.

It localises to the cytoplasm. The protein localises to the membrane. Its subcellular location is the endosome membrane. Its function is as follows. Component of the commander complex that is essential for endosomal recycling of transmembrane cargos; the commander complex is composed of the CCC subcomplex and the retriever subcomplex. Component of the retriever complex, which is a heterotrimeric complex related to retromer cargo-selective complex (CSC) and essential for retromer-independent retrieval and recycling of numerous cargos such as integrin alpha-5/beta-1 (ITGA5:ITGB1). Component of the retromer cargo-selective complex (CSC). The CSC is believed to be the core functional component of retromer or respective retromer complex variants acting to prevent missorting of selected transmembrane cargo proteins into the lysosomal degradation pathway. The recruitment of the CSC to the endosomal membrane involves RAB7A and SNX3. The SNX-BAR retromer mediates retrograde transport of cargo proteins from endosomes to the trans-Golgi network (TGN) and is involved in endosome-to-plasma membrane transport for cargo protein recycling. The SNX3-retromer mediates the retrograde endosome-to-TGN transport of WLS distinct from the SNX-BAR retromer pathway. The SNX27-retromer is believed to be involved in endosome-to-plasma membrane trafficking and recycling of a broad spectrum of cargo proteins. The CSC seems to act as recruitment hub for other proteins, such as the WASH complex and TBC1D5. Required to regulate transcytosis of the polymeric immunoglobulin receptor (pIgR-pIgA). In the endosomes, retriever complex drives the retrieval and recycling of NxxY-motif-containing cargo proteins by coupling to SNX17, a cargo essential for the homeostatic maintenance of numerous cell surface proteins associated with processes that include cell migration, cell adhesion, nutrient supply and cell signaling. The recruitment of the retriever complex to the endosomal membrane involves CCC and WASH complexes. Involved in GLUT1 endosome-to-plasma membrane trafficking; the function is dependent of association with ANKRD27. The polypeptide is Vacuolar protein sorting-associated protein 29 (Vps29) (Mus musculus (Mouse)).